The following is a 184-amino-acid chain: Isopentenyl-diphosphate Delta-isomerase (184 aa).

Positions 25 and 32 each coordinate Mn(2+). Positions Pro-30–Leu-164 constitute a Nudix hydrolase domain. Residue Cys-67 is part of the active site. His-69 lines the Mn(2+) pocket. Glu-87 contacts Mg(2+). Residues Glu-114 and Glu-116 each coordinate Mn(2+). Glu-116 is an active-site residue.

The protein belongs to the IPP isomerase type 1 family. As to quaternary structure, homodimer. Mg(2+) is required as a cofactor. It depends on Mn(2+) as a cofactor.

It localises to the cytoplasm. It carries out the reaction isopentenyl diphosphate = dimethylallyl diphosphate. Its pathway is isoprenoid biosynthesis; dimethylallyl diphosphate biosynthesis; dimethylallyl diphosphate from isopentenyl diphosphate: step 1/1. Catalyzes the 1,3-allylic rearrangement of the homoallylic substrate isopentenyl (IPP) to its highly electrophilic allylic isomer, dimethylallyl diphosphate (DMAPP). This Klebsiella pneumoniae subsp. pneumoniae (strain ATCC 700721 / MGH 78578) protein is Isopentenyl-diphosphate Delta-isomerase.